Consider the following 660-residue polypeptide: DNA mismatch repair protein MutL (660 aa).

Belongs to the DNA mismatch repair MutL/HexB family.

In terms of biological role, this protein is involved in the repair of mismatches in DNA. It is required for dam-dependent methyl-directed DNA mismatch repair. May act as a 'molecular matchmaker', a protein that promotes the formation of a stable complex between two or more DNA-binding proteins in an ATP-dependent manner without itself being part of a final effector complex. This chain is DNA mismatch repair protein MutL, found in Streptococcus pyogenes serotype M12 (strain MGAS2096).